Here is a 392-residue protein sequence, read N- to C-terminus: Lipid-A-disaccharide synthase (392 aa).

It belongs to the LpxB family.

The enzyme catalyses a lipid X + a UDP-2-N,3-O-bis[(3R)-3-hydroxyacyl]-alpha-D-glucosamine = a lipid A disaccharide + UDP + H(+). The protein operates within bacterial outer membrane biogenesis; LPS lipid A biosynthesis. Condensation of UDP-2,3-diacylglucosamine and 2,3-diacylglucosamine-1-phosphate to form lipid A disaccharide, a precursor of lipid A, a phosphorylated glycolipid that anchors the lipopolysaccharide to the outer membrane of the cell. This is Lipid-A-disaccharide synthase from Prochlorococcus marinus (strain MIT 9313).